Reading from the N-terminus, the 437-residue chain is Mitochondrial distribution and morphology protein 12 (437 aa).

Residues 1-437 (MSIDINWRTA…VYPSFWTFLI (437 aa)) enclose the SMP-LTD domain. Over residues 73 to 85 (DDDADTSDVSEDL) the composition is skewed to acidic residues. Disordered regions lie at residues 73–101 (DDDADTSDVSEDLLSEHSSQWDRTHSELN), 187–274 (SDSG…PPRM), and 354–384 (SEQQQESGGDDHRPRSGADSSAHTSQKRQGG). A compositionally biased stretch (basic and acidic residues) spans 91-101 (SQWDRTHSELN). Composition is skewed to polar residues over residues 215–240 (DTSNSTSRPSTANTLPSHLSESNNLN) and 371–381 (ADSSAHTSQKR).

Belongs to the MDM12 family. In terms of assembly, component of the ER-mitochondria encounter structure (ERMES) or MDM complex, composed of mmm1, mdm10, mdm12 and mdm34. A mmm1 homodimer associates with one molecule of mdm12 on each side in a pairwise head-to-tail manner, and the SMP-LTD domains of mmm1 and mdm12 generate a continuous hydrophobic tunnel for phospholipid trafficking.

The protein localises to the mitochondrion outer membrane. The protein resides in the endoplasmic reticulum membrane. Its function is as follows. Component of the ERMES/MDM complex, which serves as a molecular tether to connect the endoplasmic reticulum (ER) and mitochondria. Components of this complex are involved in the control of mitochondrial shape and protein biogenesis, and function in nonvesicular lipid trafficking between the ER and mitochondria. Mdm12 is required for the interaction of the ER-resident membrane protein mmm1 and the outer mitochondrial membrane-resident beta-barrel protein mdm10. The mdm12-mmm1 subcomplex functions in the major beta-barrel assembly pathway that is responsible for biogenesis of all mitochondrial outer membrane beta-barrel proteins, and acts in a late step after the SAM complex. The mdm10-mdm12-mmm1 subcomplex further acts in the TOM40-specific pathway after the action of the mdm12-mmm1 complex. Essential for establishing and maintaining the structure of mitochondria and maintenance of mtDNA nucleoids. In Aspergillus clavatus (strain ATCC 1007 / CBS 513.65 / DSM 816 / NCTC 3887 / NRRL 1 / QM 1276 / 107), this protein is Mitochondrial distribution and morphology protein 12.